The primary structure comprises 142 residues: Universal stress protein C (142 aa).

Belongs to the universal stress protein A family.

Its subcellular location is the cytoplasm. Functionally, required for resistance to DNA-damaging agents. The chain is Universal stress protein C (uspC) from Escherichia coli O6:H1 (strain CFT073 / ATCC 700928 / UPEC).